The chain runs to 439 residues: tRNA-2-methylthio-N(6)-dimethylallyladenosine synthase (439 aa).

Positions 2 to 119 (KYIYIKTWGC…LPKMIDEVEK (118 aa)) constitute an MTTase N-terminal domain. The [4Fe-4S] cluster site is built by Cys11, Cys48, Cys82, Cys156, Cys160, and Cys163. The Radical SAM core domain occupies 142–374 (KKKGYTADIS…QERINIQTML (233 aa)). The TRAM domain occupies 377–439 (RKMFGSIQSV…HTHSLKGELF (63 aa)).

The protein belongs to the methylthiotransferase family. MiaB subfamily. As to quaternary structure, monomer. Requires [4Fe-4S] cluster as cofactor.

The protein localises to the cytoplasm. The enzyme catalyses N(6)-dimethylallyladenosine(37) in tRNA + (sulfur carrier)-SH + AH2 + 2 S-adenosyl-L-methionine = 2-methylsulfanyl-N(6)-dimethylallyladenosine(37) in tRNA + (sulfur carrier)-H + 5'-deoxyadenosine + L-methionine + A + S-adenosyl-L-homocysteine + 2 H(+). Catalyzes the methylthiolation of N6-(dimethylallyl)adenosine (i(6)A), leading to the formation of 2-methylthio-N6-(dimethylallyl)adenosine (ms(2)i(6)A) at position 37 in tRNAs that read codons beginning with uridine. The sequence is that of tRNA-2-methylthio-N(6)-dimethylallyladenosine synthase from Buchnera aphidicola subsp. Acyrthosiphon pisum (strain APS) (Acyrthosiphon pisum symbiotic bacterium).